We begin with the raw amino-acid sequence, 294 residues long: Putative HTH-type transcriptional regulatory protein STK_12680 (294 aa).

One can recognise an HTH cro/C1-type domain in the interval 123–175 (LKKKREEMGLSLGEVAQALGVSRISIYDYEREDSYVSIDIAEKLVELFGDDIL). The H-T-H motif DNA-binding region spans 134-153 (LGEVAQALGVSRISIYDYER).

The polypeptide is Putative HTH-type transcriptional regulatory protein STK_12680 (Sulfurisphaera tokodaii (strain DSM 16993 / JCM 10545 / NBRC 100140 / 7) (Sulfolobus tokodaii)).